Consider the following 369-residue polypeptide: Chaperone protein DnaJ (369 aa).

In terms of domain architecture, J spans aspartate 7–glycine 73. The CR-type zinc-finger motif lies at glycine 143 to lysine 225. The Zn(2+) site is built by cysteine 156, cysteine 159, cysteine 173, cysteine 176, cysteine 199, cysteine 202, cysteine 213, and cysteine 216. 4 CXXCXGXG motif repeats span residues cysteine 156 to glycine 163, cysteine 173 to glycine 180, cysteine 199 to glycine 206, and cysteine 213 to glycine 220.

This sequence belongs to the DnaJ family. In terms of assembly, homodimer. Zn(2+) is required as a cofactor.

Its subcellular location is the cytoplasm. In terms of biological role, participates actively in the response to hyperosmotic and heat shock by preventing the aggregation of stress-denatured proteins and by disaggregating proteins, also in an autonomous, DnaK-independent fashion. Unfolded proteins bind initially to DnaJ; upon interaction with the DnaJ-bound protein, DnaK hydrolyzes its bound ATP, resulting in the formation of a stable complex. GrpE releases ADP from DnaK; ATP binding to DnaK triggers the release of the substrate protein, thus completing the reaction cycle. Several rounds of ATP-dependent interactions between DnaJ, DnaK and GrpE are required for fully efficient folding. Also involved, together with DnaK and GrpE, in the DNA replication of plasmids through activation of initiation proteins. This Thermotoga sp. (strain RQ2) protein is Chaperone protein DnaJ.